Consider the following 374-residue polypeptide: MGKGASNKKVLERVPITKPPFEYNDLKKAVPPHCFSRPLFRSFYFLLHDIIVTCILFYVASNYIPMLPGFLSYIVWPVYWISQGVFLGRLWMIGHECGHHSFSNYRWVDDSVGFLIHTATLTPYFSFKYSHRNHHAHTNSMEYDEVHIPKRKSEALDLYFEFLGNNPMGLMITMLCKLTFGYAAYIMFNYTGKKHKSGGLASHFYPQSPLFNDSERNHVLFSDVGICIVLYACYRIVMVTGAMSAFYVYGIPWVIMSAILFAATYLQHTHPSIPHYDTTEWNWLRGALSTIDRDLGFFNMNKTHYHVIHHLFPVIPEYHAQEATEAIKPILGQYYKYDGTPFLKALWREMKDCIYVESDQGQKKQGIYWFKNKI.

Transmembrane regions (helical) follow at residues 50 to 70 (IIVTCILFYVASNYIPMLPGF) and 74 to 94 (IVWPVYWISQGVFLGRLWMIG). The short motif at 95–99 (HECGH) is the Histidine box-1 element. A Histidine box-2 motif is present at residues 131-135 (HRNHH). Helical transmembrane passes span 168–188 (MGLMITMLCKLTFGYAAYIMF), 219–239 (VLFSDVGICIVLYACYRIVMV), and 246–266 (FYVYGIPWVIMSAILFAATYL). The Histidine box-3 signature appears at 306–310 (HVIHH).

The protein belongs to the fatty acid desaturase type 1 family. As to expression, expressed exclusively in the developing seeds. Not detected in leaves or flower buds.

Its subcellular location is the microsome membrane. The enzyme catalyses a (9Z,12Z)-octadecadienoyl-containing glycerolipid + AH2 + O2 = a (8E,10E,12Z)-octadecatrienoyl-containing glycerolipid + A + 2 H2O. It functions in the pathway lipid metabolism; polyunsaturated fatty acid biosynthesis. Its function is as follows. Fatty acid conjugase converting 18:2(9Z, 12Z) to calendic acid 18:3(8E, 10E, 12Z). Converts alpha-linolenic acid (18:3(9Z, 12Z, 15Z)) into 18:4(8E, 10E, 12Z, 15Z). Also has weak activity on the mono-unsaturates 16:1(9Z) and 18:1(9Z) producing two conjugated double bonds at delta(8) and delta(10) position. The polypeptide is Fatty acid conjugase FAC2 A (Calendula officinalis (Pot marigold)).